The following is a 205-amino-acid chain: Large ribosomal subunit protein bL21m (205 aa).

The transit peptide at 1–39 (MAASSLTVTLGRLASACSHSILRPSGPGAASLWSASRRF) directs the protein to the mitochondrion.

This sequence belongs to the bacterial ribosomal protein bL21 family. Component of the mitochondrial large ribosomal subunit (mt-LSU). Mature mammalian 55S mitochondrial ribosomes consist of a small (28S) and a large (39S) subunit. The 28S small subunit contains a 12S ribosomal RNA (12S mt-rRNA) and 30 different proteins. The 39S large subunit contains a 16S rRNA (16S mt-rRNA), a copy of mitochondrial valine transfer RNA (mt-tRNA(Val)), which plays an integral structural role, and 52 different proteins.

The protein localises to the mitochondrion. The polypeptide is Large ribosomal subunit protein bL21m (MRPL21) (Homo sapiens (Human)).